The chain runs to 132 residues: Ribosome-binding factor A (132 aa).

The protein belongs to the RbfA family. In terms of assembly, monomer. Binds 30S ribosomal subunits, but not 50S ribosomal subunits or 70S ribosomes.

It is found in the cytoplasm. In terms of biological role, one of several proteins that assist in the late maturation steps of the functional core of the 30S ribosomal subunit. Associates with free 30S ribosomal subunits (but not with 30S subunits that are part of 70S ribosomes or polysomes). Required for efficient processing of 16S rRNA. May interact with the 5'-terminal helix region of 16S rRNA. This chain is Ribosome-binding factor A, found in Teredinibacter turnerae (strain ATCC 39867 / T7901).